A 171-amino-acid polypeptide reads, in one-letter code: Co-chaperone protein HscB (171 aa).

In terms of domain architecture, J spans 2–74 (DYFTLFGLPA…LTRAEYLLSL (73 aa)).

Belongs to the HscB family. As to quaternary structure, interacts with HscA and stimulates its ATPase activity. Interacts with IscU.

Its function is as follows. Co-chaperone involved in the maturation of iron-sulfur cluster-containing proteins. Seems to help targeting proteins to be folded toward HscA. This chain is Co-chaperone protein HscB, found in Salmonella heidelberg (strain SL476).